The following is a 63-amino-acid chain: Large ribosomal subunit protein bL32 (63 aa).

A disordered region spans residues 1–20; the sequence is MANPKAKMSKSRRDKRRAQF. The span at 7-18 shows a compositional bias: basic residues; that stretch reads KMSKSRRDKRRA.

This sequence belongs to the bacterial ribosomal protein bL32 family.

The sequence is that of Large ribosomal subunit protein bL32 from Chlorobaculum parvum (strain DSM 263 / NCIMB 8327) (Chlorobium vibrioforme subsp. thiosulfatophilum).